The chain runs to 57 residues: MKPAVDEMFPEGAGPYVDLDEAGGSSGLLMDLAANEKAVHSDFFNDFEDLFDDDDIQ.

Belongs to the CSN9 family. In terms of assembly, component of the CSN complex, probably composed of cops1, cops2, cops3, cops4, cops5, cops6, cops7, cops8 and cops9.

Its subcellular location is the nucleus. The protein resides in the cytoplasm. The protein localises to the nucleoplasm. Its function is as follows. Component of the COP9 signalosome complex (CSN), a complex involved in various cellular and developmental processes. The CSN complex is an essential regulator of the ubiquitin (Ubl) conjugation pathway by mediating the deneddylation of the cullin subunits of SCF-type E3 ligase complexes, leading to decrease the Ubl ligase activity. May play a role in cell proliferation. In Danio rerio (Zebrafish), this protein is COP9 signalosome complex subunit 9.